Consider the following 178-residue polypeptide: Inner membrane-spanning protein YciB (178 aa).

5 helical membrane-spanning segments follow: residues 22 to 42 (IFWATAALIVATALAVIYSWY), 50 to 70 (MTLVTFVLVAVFGGLTIYFHN), 76 to 96 (WKVTIIYALFAGALLIGQWVM), 121 to 141 (IAWALFFIFCGLLNIYVAFWL), and 149 to 169 (FKVFGIPGLTLVFTLLSGVYI).

It belongs to the YciB family.

The protein localises to the cell inner membrane. Functionally, plays a role in cell envelope biogenesis, maintenance of cell envelope integrity and membrane homeostasis. This Cronobacter sakazakii (strain ATCC BAA-894) (Enterobacter sakazakii) protein is Inner membrane-spanning protein YciB.